Reading from the N-terminus, the 377-residue chain is 2-iminoacetate synthase (377 aa).

One can recognise a Radical SAM core domain in the interval 71–301; it reads NTVSFYVPLY…PEIELSLSTR (231 aa). The [4Fe-4S] cluster site is built by cysteine 85, cysteine 89, and cysteine 92.

It belongs to the radical SAM superfamily. ThiH family. As to quaternary structure, forms a heterodimer with ThiG. [4Fe-4S] cluster serves as cofactor.

It carries out the reaction L-tyrosine + S-adenosyl-L-methionine + NADPH = 2-iminoacetate + 4-methylphenol + 5'-deoxyadenosine + L-methionine + NADP(+). Its pathway is cofactor biosynthesis; thiamine diphosphate biosynthesis. Its function is as follows. Catalyzes the radical-mediated cleavage of tyrosine to 2-iminoacetate and 4-cresol. This chain is 2-iminoacetate synthase (thiH), found in Escherichia coli (strain K12).